The sequence spans 232 residues: dITP/XTP pyrophosphatase (232 aa).

10–15 (TRNKGK) contacts substrate. Asp72 (proton acceptor) is an active-site residue. Asp72 contacts Mg(2+). Substrate is bound by residues Ser73, 153-156 (FGYD), Lys176, and 181-182 (HR).

The protein belongs to the HAM1 NTPase family. In terms of assembly, homodimer. Mg(2+) is required as a cofactor.

It catalyses the reaction XTP + H2O = XMP + diphosphate + H(+). It carries out the reaction dITP + H2O = dIMP + diphosphate + H(+). The enzyme catalyses ITP + H2O = IMP + diphosphate + H(+). In terms of biological role, pyrophosphatase that catalyzes the hydrolysis of nucleoside triphosphates to their monophosphate derivatives, with a high preference for the non-canonical purine nucleotides XTP (xanthosine triphosphate), dITP (deoxyinosine triphosphate) and ITP. Seems to function as a house-cleaning enzyme that removes non-canonical purine nucleotides from the nucleotide pool, thus preventing their incorporation into DNA/RNA and avoiding chromosomal lesions. The sequence is that of dITP/XTP pyrophosphatase from Syntrophobacter fumaroxidans (strain DSM 10017 / MPOB).